Here is a 495-residue protein sequence, read N- to C-terminus: Angiopoietin-2 (495 aa).

An N-terminal signal peptide occupies residues Met-1–Ala-18. 6 N-linked (GlcNAc...) asparagine glycosylation sites follow: Asn-88, Asn-118, Asn-132, Asn-150, Asn-239, and Asn-303. A coiled-coil region spans residues Ser-165 to Gln-247. Residues Lys-274–Asp-494 enclose the Fibrinogen C-terminal domain. The cysteines at positions 283 and 312 are disulfide-linked. 4 residues coordinate Ca(2+): Asp-428, Asp-430, Cys-432, and Cys-434. Intrachain disulfides connect Cys-432/Cys-434 and Cys-436/Cys-449.

Interacts with TEK/TIE2, competing for the same binding site as ANGPT1. Interacts with ITGA5. Interacts with SVEP1/polydom. Interacts with THBD; this interaction significantly inhibits the generation of activated PC and TAFIa/CPB2 by the thrombin/thrombomodulin complex.

The protein localises to the secreted. Binds to TEK/TIE2, competing for the ANGPT1 binding site, and modulating ANGPT1 signaling. Can induce tyrosine phosphorylation of TEK/TIE2 in the absence of ANGPT1. In the absence of angiogenic inducers, such as VEGF, ANGPT2-mediated loosening of cell-matrix contacts may induce endothelial cell apoptosis with consequent vascular regression. In concert with VEGF, it may facilitate endothelial cell migration and proliferation, thus serving as a permissive angiogenic signal. Involved in the regulation of lymphangiogenesis. The protein is Angiopoietin-2 (ANGPT2) of Canis lupus familiaris (Dog).